Consider the following 163-residue polypeptide: Nucleotide-binding protein HS_0688 (163 aa).

It belongs to the YajQ family.

In terms of biological role, nucleotide-binding protein. The sequence is that of Nucleotide-binding protein HS_0688 from Histophilus somni (strain 129Pt) (Haemophilus somnus).